A 233-amino-acid chain; its full sequence is MEVYPAIDLMKGRAVRLYRGRRESVKVYGDPVKIAQGFSELVDKIHVVDLDGAFEGRPRNLEVVERIIEETGLRVQVGGGFRTYEAVGRAYEVGVENVILGTKALDTAFLERLTDEFGGITVSLDVKDGRIAVKGWVEEGSIKVRDAFEILRNYVNRFVYTSIERDGTLTGVDEIGRFWGDEEFIYAGGVSSAEDIVRLAERGFSGVIVGKALYEGVVKLEDLLEVAKCLRRG.

Asp8 acts as the Proton acceptor in catalysis. Asp125 (proton donor) is an active-site residue.

The protein belongs to the HisA/HisF family.

It localises to the cytoplasm. The enzyme catalyses 1-(5-phospho-beta-D-ribosyl)-5-[(5-phospho-beta-D-ribosylamino)methylideneamino]imidazole-4-carboxamide = 5-[(5-phospho-1-deoxy-D-ribulos-1-ylimino)methylamino]-1-(5-phospho-beta-D-ribosyl)imidazole-4-carboxamide. It functions in the pathway amino-acid biosynthesis; L-histidine biosynthesis; L-histidine from 5-phospho-alpha-D-ribose 1-diphosphate: step 4/9. The polypeptide is 1-(5-phosphoribosyl)-5-[(5-phosphoribosylamino)methylideneamino] imidazole-4-carboxamide isomerase (Thermococcus kodakarensis (strain ATCC BAA-918 / JCM 12380 / KOD1) (Pyrococcus kodakaraensis (strain KOD1))).